The chain runs to 147 residues: Fibromodulin (147 aa).

LRR repeat units follow at residues 1 to 15 (LDHN…PLPR), 16 to 37 (SLRE…ALEG), 40 to 61 (NLTA…MRGL), 63 to 84 (SLIL…LPSA), 85 to 105 (LEQL…YFRG), and 108 to 128 (KLLY…ASNT). The N-linked (GlcNAc...) (keratan sulfate) asparagine glycan is linked to N5. N-linked (GlcNAc...) (keratan sulfate) asparagine glycosylation occurs at N40. N-linked (GlcNAc...) (keratan sulfate) asparagine glycosylation is present at N130. An LRR 7 repeat occupies 133–147 (SLLELDLSYNQLQKI).

Belongs to the small leucine-rich proteoglycan (SLRP) family. SLRP class II subfamily. In terms of assembly, binds to type I and type II collagen. Binds keratan sulfate chains.

The protein resides in the secreted. It localises to the extracellular space. Its subcellular location is the extracellular matrix. Affects the rate of fibrils formation. May have a primary role in collagen fibrillogenesis. In Sus scrofa (Pig), this protein is Fibromodulin (FMOD).